We begin with the raw amino-acid sequence, 201 residues long: Glycerol-3-phosphate acyltransferase (201 aa).

The next 5 helical transmembrane spans lie at 10-30 (MLIGALIFGYVLGSIPFGLIL), 60-80 (LAAATLILDALKGTAAALIAA), 86-106 (AAIAAGFGAFIGHLFPVWIGF), 116-136 (LGVLIGLAWAGALVFAAAWIV), and 166-186 (ALAALFAIMTVIVFIKHRANI).

This sequence belongs to the PlsY family. Probably interacts with PlsX.

The protein localises to the cell inner membrane. The enzyme catalyses an acyl phosphate + sn-glycerol 3-phosphate = a 1-acyl-sn-glycero-3-phosphate + phosphate. It functions in the pathway lipid metabolism; phospholipid metabolism. Its function is as follows. Catalyzes the transfer of an acyl group from acyl-phosphate (acyl-PO(4)) to glycerol-3-phosphate (G3P) to form lysophosphatidic acid (LPA). This enzyme utilizes acyl-phosphate as fatty acyl donor, but not acyl-CoA or acyl-ACP. This is Glycerol-3-phosphate acyltransferase from Brucella melitensis biotype 2 (strain ATCC 23457).